The following is a 179-amino-acid chain: Large ribosomal subunit protein uL5 (179 aa).

The protein belongs to the universal ribosomal protein uL5 family. Part of the 50S ribosomal subunit; part of the 5S rRNA/L5/L18/L25 subcomplex. Contacts the 5S rRNA and the P site tRNA. Forms a bridge to the 30S subunit in the 70S ribosome.

Functionally, this is one of the proteins that bind and probably mediate the attachment of the 5S RNA into the large ribosomal subunit, where it forms part of the central protuberance. In the 70S ribosome it contacts protein S13 of the 30S subunit (bridge B1b), connecting the 2 subunits; this bridge is implicated in subunit movement. Contacts the P site tRNA; the 5S rRNA and some of its associated proteins might help stabilize positioning of ribosome-bound tRNAs. The sequence is that of Large ribosomal subunit protein uL5 from Cronobacter sakazakii (strain ATCC BAA-894) (Enterobacter sakazakii).